The sequence spans 83 residues: uncharacterized protein (83 aa).

This is an uncharacterized protein from Dictyostelium discoideum (Social amoeba).